Reading from the N-terminus, the 211-residue chain is Probable nicotinate-nucleotide adenylyltransferase (211 aa).

The protein belongs to the NadD family.

It carries out the reaction nicotinate beta-D-ribonucleotide + ATP + H(+) = deamido-NAD(+) + diphosphate. It functions in the pathway cofactor biosynthesis; NAD(+) biosynthesis; deamido-NAD(+) from nicotinate D-ribonucleotide: step 1/1. Catalyzes the reversible adenylation of nicotinate mononucleotide (NaMN) to nicotinic acid adenine dinucleotide (NaAD). The chain is Probable nicotinate-nucleotide adenylyltransferase from Cellvibrio japonicus (strain Ueda107) (Pseudomonas fluorescens subsp. cellulosa).